Reading from the N-terminus, the 1107-residue chain is Rho GTPase-activating protein 45 (1107 aa).

The segment at 1–99 (MFSRKKRELM…SPPESGEGPF (99 aa)) is disordered. Positions 37–55 (DSSNDLASSPPSNSSPVSS) are enriched in low complexity. The span at 56-66 (GTLKRPSSLSR) shows a compositional bias: polar residues. Coiled coils occupy residues 103–132 (EDIS…EELK) and 363–485 (NMRR…QSDQ). Positions 261–524 (EDVDVILQRS…SSKLYDLGQQ (264 aa)) constitute an F-BAR domain. Composition is skewed to basic and acidic residues over residues 414 to 423 (NATRAEEEQS), 434 to 444 (RRAEEEAKNRA), and 573 to 588 (ENKE…ERRG). Disordered stretches follow at residues 414-444 (NATR…KNRA) and 564-595 (FNSQ…HQVH). The Phorbol-ester/DAG-type zinc-finger motif lies at 671–716 (THRLRKLRTPSKCRECNSYVYFQGAECEECSLACHKKCLETLAIQC). Positions 730 to 942 (RDFSETALRS…TLIIFYSTIF (213 aa)) constitute a Rho-GAP domain. Residues 981–1036 (LTPEYQIPVFKEPGASTVESDSESDGAEDIPGTWKPQTTRGHLTKEASVTSAEDIP) form a disordered region. A compositionally biased stretch (polar residues) spans 1015-1031 (KPQTTRGHLTKEASVTS).

The protein localises to the cytoplasm. Its subcellular location is the cell projection. The protein resides in the ruffle membrane. In terms of biological role, contains a GTPase activator for the Rho-type GTPases (RhoGAP) domain that would be able to negatively regulate the actin cytoskeleton as well as cell spreading. However, also contains N-terminally a BAR-domin which is able to play an autoinhibitory effect on this RhoGAP activity. The chain is Rho GTPase-activating protein 45 from Xenopus laevis (African clawed frog).